The following is a 242-amino-acid chain: Protein crossbronx (242 aa).

The UBC core domain maps to 20–176 (QQEYKILAEY…VQENIKESKA (157 aa)).

The protein belongs to the ubiquitin-conjugating enzyme family. FTS subfamily.

This Drosophila ananassae (Fruit fly) protein is Protein crossbronx (cbx).